Here is a 205-residue protein sequence, read N- to C-terminus: S-crystallin SL11 (205 aa).

One can recognise a GST N-terminal domain in the interval 2–80 (PSYTLYYFNG…YLAREFGFYG (79 aa)). One can recognise a GST C-terminal domain in the interval 82–205 (NNMDMFKVDC…YIKKRNNTAF (124 aa)).

The protein belongs to the GST superfamily. As to expression, lens.

Its function is as follows. S-crystallins are structural components of squids and octopi eye lens. Contains relatively little if any GST activity. The protein is S-crystallin SL11 of Nototodarus sloanii (Wellington flying squid).